We begin with the raw amino-acid sequence, 81 residues long: uncharacterized protein (81 aa).

2 helical membrane-spanning segments follow: residues 27 to 47 (ASLL…LNLT) and 54 to 74 (IFGA…IFIM).

It is found in the cell membrane. This is an uncharacterized protein from Bacillus subtilis (strain 168).